Consider the following 253-residue polypeptide: tRNA pseudouridine synthase A (253 aa).

Asp53 (nucleophile) is an active-site residue. Residue Tyr112 participates in substrate binding.

Belongs to the tRNA pseudouridine synthase TruA family. In terms of assembly, homodimer.

The catalysed reaction is uridine(38/39/40) in tRNA = pseudouridine(38/39/40) in tRNA. In terms of biological role, formation of pseudouridine at positions 38, 39 and 40 in the anticodon stem and loop of transfer RNAs. The sequence is that of tRNA pseudouridine synthase A from Lactococcus lactis subsp. lactis (strain IL1403) (Streptococcus lactis).